A 175-amino-acid chain; its full sequence is DASH complex subunit DAM1 (175 aa).

Residues 1 to 39 form a disordered region; that stretch reads MAPEDTNPQSSHRRTRSTSRSRPTTPLRPSSRSSFRSSA. Over residues 20 to 39 the composition is skewed to low complexity; it reads RSRPTTPLRPSSRSSFRSSA.

The protein belongs to the DASH complex DAM1 family. In terms of assembly, component of the DASH complex consisting of ASK1, DAD1, DAD2, DAD3, DAD4, DAM1, DUO1, HSK3, SPC19 and SPC34, with a stoichiometry of one copy of each subunit per complex. Multiple DASH complexes oligomerize to form a ring that encircles spindle microtubules and organizes the rod-like NDC80 complexes of the outer kinetochore. DASH complex oligomerization strengthens microtubule attachments. On cytoplasmic microtubules, DASH complexes appear to form patches instead of rings.

Its subcellular location is the chromosome. It is found in the centromere. The protein resides in the kinetochore. It localises to the cytoplasm. The protein localises to the cytoskeleton. Its subcellular location is the spindle. It is found in the nucleus. Functionally, component of the DASH complex that connects microtubules with kinetochores and couples microtubule depolymerisation to chromosome movement; it is involved in retrieving kinetochores to the spindle poles before their re-orientation on the spindle in early mitosis and allows microtubule depolymerization to pull chromosomes apart and resist detachment during anaphase. Kinetochores, consisting of a centromere-associated inner segment and a microtubule-contacting outer segment, play a crucial role in chromosome segregation by mediating the physical connection between centromeric DNA and microtubules. Kinetochores also serve as an input point for the spindle assembly checkpoint, which delays anaphase until all chromosomes have bioriented on the mitotic spindle. This is DASH complex subunit DAM1 from Chaetomium thermophilum (strain DSM 1495 / CBS 144.50 / IMI 039719) (Thermochaetoides thermophila).